The following is a 56-amino-acid chain: Alpha-pompilidotoxin (56 aa).

The signal sequence occupies residues 1-22 (MFKQLILLALAAVFLLINISSA). A propeptide spanning residues 23-42 (EPAAEPNANAEPLAEASAEP) is cleaved from the precursor. Residue leucine 55 is modified to Leucine amide.

Expressed by the venom gland.

The protein localises to the secreted. Functionally, inhibits sodium channels (Nav) inactivation. Shows two types of inhibitory activities on channels. Inhibition of hNav1.6/SCN8A shows a large increase in the steady-state current component without any increase in the slow component, whereas inhibition of hNav1.1/SCN1A, hNav1.2/SCN2A, hNav1.3/SCN3A and hNav1.7/SCN9A shows a large increase in the slow component with only a small steady-state component. Is 5-fold less potent than beta-PMTX for inducing repetitive action potentials in lobster neuromuscular junctions. This chain is Alpha-pompilidotoxin, found in Anoplius samariensis (Solitary wasp).